We begin with the raw amino-acid sequence, 396 residues long: MTVRLILAKGREKSLLRRHPWIFSGAVQRLEGDALSGETIDILDSQGKWLARAAYSPESQILARVWTFQQDEVIDCAFFIRRLQQAQNWRDWLAQRDGLNGYRLIAGESDGLPGITIDRFQNFLVLQLLSAGAEYQRETLVSALQHCYPECSIYDRSDVSVRKKEGLPLTQGLICGEMPPALLPISENGMQLFVDIQQGHKTGFYLDQRDSRLAARNYANGRRVLNCFSYTGAFAVAALMGNCQQVISVDTSQSVLDIAKQNIELNQLDLSKTEFVRDDVFQLLRSYRAQGEKFDLIIMDPPKFVENKSQLASACRGYKDINMLAIQLLRPGGILLSFSCSGLMPVDLFQKILADAALDAGHDIQFIEQFRQAADHPVIAAYPEGLYLKGFACRVM.

The PUA domain occupies 2-81 (TVRLILAKGR…EVIDCAFFIR (80 aa)).

This sequence belongs to the methyltransferase superfamily. RlmI family.

It localises to the cytoplasm. It catalyses the reaction cytidine(1962) in 23S rRNA + S-adenosyl-L-methionine = 5-methylcytidine(1962) in 23S rRNA + S-adenosyl-L-homocysteine + H(+). Its function is as follows. Specifically methylates the cytosine at position 1962 (m5C1962) of 23S rRNA. This is Ribosomal RNA large subunit methyltransferase I from Yersinia pestis bv. Antiqua (strain Antiqua).